We begin with the raw amino-acid sequence, 402 residues long: Palmitoyltransferase PFA4 (402 aa).

The Cytoplasmic portion of the chain corresponds to 1–8; that stretch reads MAVQLKWP. A helical membrane pass occupies residues 9-29; sequence IIGVVIPCVLIAMVAYGSHYF. At 30-39 the chain is on the lumenal side; the sequence is VFRTNLSRTE. A helical transmembrane segment spans residues 40 to 60; sequence QILYEVYVCIVWLSYYLAIVV. At 61-125 the chain is on the cytoplasmic side; sequence DPGSPPKNFT…GHNNLPHFLR (65 aa). The DHHC domain occupies 78-128; it reads RWCKKCQNYKPERSHHCKTCNKCVLKMDHHCPWTYNCVGHNNLPHFLRFVF. Residue C108 is the S-palmitoyl cysteine intermediate of the active site. Residues 126–146 form a helical membrane-spanning segment; sequence FVFFLIVGMTYVLFQLGKQVL. The Lumenal segment spans residues 147–165; sequence HYYDSSKLPSYLIDKKEMC. Residues 166–186 form a helical membrane-spanning segment; sequence AVIFLLPVTFFVFVSIIILFV. Topologically, residues 187–402 are cytoplasmic; sequence RCMINLLFRG…LVSKDEISNN (216 aa).

It belongs to the DHHC palmitoyltransferase family. PFA4 subfamily.

It localises to the endoplasmic reticulum membrane. It catalyses the reaction L-cysteinyl-[protein] + hexadecanoyl-CoA = S-hexadecanoyl-L-cysteinyl-[protein] + CoA. Mediates the reversible addition of palmitate to target proteins, thereby regulating their membrane association and biological function. In Debaryomyces hansenii (strain ATCC 36239 / CBS 767 / BCRC 21394 / JCM 1990 / NBRC 0083 / IGC 2968) (Yeast), this protein is Palmitoyltransferase PFA4.